The following is a 569-amino-acid chain: Urease subunit beta (569 aa).

One can recognise a Urease domain in the interval 131–569 (GGIDTHIHFI…VSLGQLYCLF (439 aa)). His136, His138, and Lys219 together coordinate Ni(2+). Lys219 bears the N6-carboxylysine mark. Residue His221 coordinates substrate. 2 residues coordinate Ni(2+): His248 and His274. His322 serves as the catalytic Proton donor. Residue Asp362 participates in Ni(2+) binding.

The protein belongs to the metallo-dependent hydrolases superfamily. Urease alpha subunit family. Heterohexamer of 3 UreA (alpha) and 3 UreB (beta) subunits. It depends on Ni cation as a cofactor. Post-translationally, carboxylation allows a single lysine to coordinate two nickel ions.

Its subcellular location is the cytoplasm. The enzyme catalyses urea + 2 H2O + H(+) = hydrogencarbonate + 2 NH4(+). It functions in the pathway nitrogen metabolism; urea degradation; CO(2) and NH(3) from urea (urease route): step 1/1. This is Urease subunit beta from Helicobacter hepaticus (strain ATCC 51449 / 3B1).